We begin with the raw amino-acid sequence, 322 residues long: Protease HtpX homolog (322 aa).

2 helical membrane passes run isoleucine 19–leucine 39 and phenylalanine 61–phenylalanine 81. Zn(2+) is bound at residue histidine 165. Residue glutamate 166 is part of the active site. Histidine 169 contributes to the Zn(2+) binding site. Transmembrane regions (helical) follow at residues valine 175–alanine 195 and isoleucine 216–methionine 236. Glutamate 245 serves as a coordination point for Zn(2+).

Belongs to the peptidase M48B family. It depends on Zn(2+) as a cofactor.

The protein resides in the cell inner membrane. This is Protease HtpX homolog from Bacteroides fragilis (strain YCH46).